Consider the following 73-residue polypeptide: UPF0435 protein lmo1707 (73 aa).

Belongs to the UPF0435 family.

The polypeptide is UPF0435 protein lmo1707 (Listeria monocytogenes serovar 1/2a (strain ATCC BAA-679 / EGD-e)).